A 204-amino-acid polypeptide reads, in one-letter code: Ribosome maturation factor RimP (204 aa).

A disordered region spans residues 176-204 (GNFDESQFDEIEESEGEEADEAEQPPTKH). Over residues 181 to 198 (SQFDEIEESEGEEADEAE) the composition is skewed to acidic residues.

This sequence belongs to the RimP family.

Its subcellular location is the cytoplasm. Functionally, required for maturation of 30S ribosomal subunits. The sequence is that of Ribosome maturation factor RimP from Cereibacter sphaeroides (strain KD131 / KCTC 12085) (Rhodobacter sphaeroides).